A 246-amino-acid polypeptide reads, in one-letter code: MKISVLTIFPEMVEVIKKYGVISRAVQENKIEINIFNLRDFTSDKHRTVDDYPFGGGPGMVMKPEPFFRFYDFYVQAFGKPHTILTSPQGRTFNNDLVKELSLKENLLIICGRYEGIDERVMELVDDEISIGDYVLTGGELPAMVMIDAISRFVPGVISDESVIEESFNTGLLDHPHYTRPREFNGRKVPEVLLEGNHEKIELWRRKMSLKKTIQRRPDLFLKKEFDEVDKIALLELLRELINDVK.

Residues G112 and 131–136 (IGDYVL) each bind S-adenosyl-L-methionine.

Belongs to the RNA methyltransferase TrmD family. Homodimer.

The protein resides in the cytoplasm. The enzyme catalyses guanosine(37) in tRNA + S-adenosyl-L-methionine = N(1)-methylguanosine(37) in tRNA + S-adenosyl-L-homocysteine + H(+). In terms of biological role, specifically methylates guanosine-37 in various tRNAs. The sequence is that of tRNA (guanine-N(1)-)-methyltransferase from Thermosipho africanus (strain TCF52B).